We begin with the raw amino-acid sequence, 578 residues long: DNA primase (578 aa).

Residues 40–64 (CPFHQEKTPSFTVNFEKQFYFCFGC) form a CHC2-type zinc finger. Residues 257–339 (KQILIVEGYV…GKNVKFIFLP (83 aa)) enclose the Toprim domain. Positions 263, 307, and 309 each coordinate Mg(2+).

The protein belongs to the DnaG primase family. As to quaternary structure, monomer. Interacts with DnaB. Zn(2+) is required as a cofactor. Mg(2+) serves as cofactor.

The catalysed reaction is ssDNA + n NTP = ssDNA/pppN(pN)n-1 hybrid + (n-1) diphosphate.. Its function is as follows. RNA polymerase that catalyzes the synthesis of short RNA molecules used as primers for DNA polymerase during DNA replication. The polypeptide is DNA primase (Buchnera aphidicola subsp. Baizongia pistaciae (strain Bp)).